The sequence spans 568 residues: Urease subunit alpha (568 aa).

The Urease domain occupies G133 to F568. Ni(2+) is bound by residues H138, H140, and K221. N6-carboxylysine is present on K221. H223 is a substrate binding site. The Ni(2+) site is built by H250 and H276. H324 acts as the Proton donor in catalysis. Residue D364 participates in Ni(2+) binding.

The protein belongs to the metallo-dependent hydrolases superfamily. Urease alpha subunit family. Heterohexamer of 3 UreC (alpha) and 3 UreAB (gamma/beta) subunits. It depends on Ni cation as a cofactor. Post-translationally, carboxylation allows a single lysine to coordinate two nickel ions.

Its subcellular location is the cytoplasm. It catalyses the reaction urea + 2 H2O + H(+) = hydrogencarbonate + 2 NH4(+). It participates in nitrogen metabolism; urea degradation; CO(2) and NH(3) from urea (urease route): step 1/1. In Deinococcus radiodurans (strain ATCC 13939 / DSM 20539 / JCM 16871 / CCUG 27074 / LMG 4051 / NBRC 15346 / NCIMB 9279 / VKM B-1422 / R1), this protein is Urease subunit alpha.